We begin with the raw amino-acid sequence, 426 residues long: MGSSSLSEDYRQCLERELRRGRAGVCGDPSLRAVLWQILVEDFDLHGALQDDALALFTDGLWGRADLAPALQDLARAFELLELAAVHLYLLPWRKEFTTIKTFSGGYVHVLKGVLSEELLTRSFQKMGYVRRDNHRLMVTTPPPACQLVQVALGCFALRLECEILSEVLTQLGTSVLPAEELLRARRASGDVASCVAWLQQRLAQDEEPPPLPPRGTPATYGAPVDLYQDLQEDESSEASLYGEPSPGLDSPPVELAYRPPLWEQSAKLWGSGGQPWEPPADDMHRASSPPYGALEEELEPEPSAFSFLSLRRELSRSGDLAPPESPSSPGQASPRHRQAEAAASSAYGPAVEPLSYQAHSCLSPGNLPTLCCDTCRQLHATHCTALSACRPTHSLRILLGDNQRRLWLQRAQVDNLLYDSPGAHP.

4 disordered regions span residues 204 to 223 (AQDEEPPPLPPRGTPATYGA), 234 to 256 (DESSEASLYGEPSPGLDSPPVEL), 269 to 300 (LWGSGGQPWEPPADDMHRASSPPYGALEEELE), and 316 to 347 (SRSGDLAPPESPSSPGQASPRHRQAEAAASSA). A phosphoserine mark is found at Ser318 and Ser326.

The protein belongs to the SPATA2 family.

In Mus musculus (Mouse), this protein is Spermatogenesis-associated protein 2-like protein.